Reading from the N-terminus, the 234-residue chain is Orotidine 5'-phosphate decarboxylase (234 aa).

Residues Asp-11, Lys-33, 60–69 (DLKFHDIPNT), Thr-120, Arg-181, Gln-190, Gly-210, and Arg-211 contribute to the substrate site. The active-site Proton donor is Lys-62.

It belongs to the OMP decarboxylase family. Type 1 subfamily. In terms of assembly, homodimer.

The catalysed reaction is orotidine 5'-phosphate + H(+) = UMP + CO2. It functions in the pathway pyrimidine metabolism; UMP biosynthesis via de novo pathway; UMP from orotate: step 2/2. Functionally, catalyzes the decarboxylation of orotidine 5'-monophosphate (OMP) to uridine 5'-monophosphate (UMP). This chain is Orotidine 5'-phosphate decarboxylase, found in Aliivibrio salmonicida (strain LFI1238) (Vibrio salmonicida (strain LFI1238)).